A 481-amino-acid chain; its full sequence is Tripartite motif-containing protein 10 (481 aa).

The RING-type zinc finger occupies 16-61 (CPICQGTLREPVTIDCGHNFCRACLTRYCEIPGPDLEESPTCPLCK). A B box-type zinc finger spans residues 94-135 (GEEDVCQEHGEKIYFFCEDDEMQLCVVCREAGEHATHTMRFL). Residues Cys99, His102, Cys121, and His127 each contribute to the Zn(2+) site. Residues 150 to 177 (LKCLRKEREEIQEIQSRENKRMQVLLTQ) are a coiled coil. The region spanning 292–481 (REMKMFLEKL…GRGSSFSLSS (190 aa)) is the B30.2/SPRY domain.

Belongs to the TRIM/RBCC family. In terms of assembly, interacts with IFNAR1; this interaction prevents association of IFNAR1 with TYK2.

Its subcellular location is the cytoplasm. In terms of biological role, E3 ligase that plays an essential role in the differentiation and survival of terminal erythroid cells. May directly bind to PTEN and promote its ubiquitination, resulting in its proteasomal degradation and activation of hypertrophic signaling. In addition, plays a role in immune response regulation by repressing the phosphorylation of STAT1 and STAT2 in the interferon/JAK/STAT signaling pathway independent of its E3 ligase activity. Mechanistically, interacts with the intracellular domain of IFNAR1 and thereby inhibits the association between TYK2 and IFNAR1. This chain is Tripartite motif-containing protein 10 (TRIM10), found in Homo sapiens (Human).